The primary structure comprises 120 residues: Eukaryotic translation initiation factor 4E-binding protein 2 (120 aa).

A phosphothreonine; by MTOR mark is found at Thr37 and Thr46. Positions 54–60 match the YXXXXLphi motif motif; that stretch reads YDRKFLL. Residue Ser65 is modified to Phosphoserine; by MTOR. Position 70 is a phosphothreonine; by MTOR (Thr70). Ser83 carries the phosphoserine modification. A deamidated asparagine mark is found at Asn99 and Asn102. Positions 116–120 match the TOS motif motif; it reads FEMDI.

The protein belongs to the eIF4E-binding protein family. Hypophosphorylated EIF4EBP2 interacts with EIF4E; phosphorylation of EIF4EBP2 by mTORC1 causes dissociation of the complex allowing EIF4G1/EIF4G3 to bind and consequent initiation of translation. Interacts (via TOS motif) with RPTOR; promoting phosphorylation by mTORC1. Interacts with PCMT1; required to prevent isoaspartate accumulation and convert isoaspartate to Asp. Post-translationally, phosphorylation at Thr-37, Thr-46, Ser-65, Thr-70 and Ser-83 is mediated by MTOR and corresponds to the hyperphosphorylated form: it abolishes binding to EIF4E by inducing folding of intrinsically disordered regions. First phosphorylated at Thr-37 and Thr-46 by MTOR, inducing folding of region encompassing residues from Pro-18 to Arg-62 of into a four-stranded beta-domain that sequesters the helical YXXXXLPhi motif into a partly buried beta-strand, blocking accessibility to EIF4E. Protein phosphorylated at Thr-37 and Thr-46 is however unstable and subsequent phosphorylation at Ser-65, Thr-70 and Ser-83 is required to stabilize the fold, decreasing affinity for EIF4E by a factor of 4000. Phosphorylated in response to insulin, EGF and PDGF. Deamidated at Asn-99 and Asn-102 to aspartate (Asp) in brain. Deamidation promotes interaction with RPTOR, subsequent phosphorylation by mTORC1 and increased translation, leading to impair kinetics of excitatory synaptic transmission. Deamidation takes place during postnatal development, when the PI3K-Akt-mTOR signaling is reduced, suggesting it acts as a compensatory mechanism to promote translation despite attenuated PI3K-Akt-mTOR signaling in neuron development. Deamidation converts Asn residues into a mixture of Asp and isoaspartate; interactions with PCMT1 is required to prevent isoaspartate accumulation and convert isoaspartate to Asp. Enriched in brain.

It is found in the cytoplasm. It localises to the nucleus. In terms of biological role, repressor of translation initiation involved in synaptic plasticity, learning and memory formation. Regulates EIF4E activity by preventing its assembly into the eIF4F complex: hypophosphorylated form of EIF4EBP2 competes with EIF4G1/EIF4G3 and strongly binds to EIF4E, leading to repress translation. In contrast, hyperphosphorylated form dissociates from EIF4E, allowing interaction between EIF4G1/EIF4G3 and EIF4E, leading to initiation of translation. EIF4EBP2 is enriched in brain and acts as a regulator of synapse activity and neuronal stem cell renewal via its ability to repress translation initiation. Mediates the regulation of protein translation by hormones, growth factors and other stimuli that signal through the MAP kinase and mTORC1 pathways. This is Eukaryotic translation initiation factor 4E-binding protein 2 from Mus musculus (Mouse).